We begin with the raw amino-acid sequence, 119 residues long: Large ribosomal subunit protein uL18 (119 aa).

This sequence belongs to the universal ribosomal protein uL18 family. Part of the 50S ribosomal subunit; part of the 5S rRNA/L5/L18/L25 subcomplex. Contacts the 5S and 23S rRNAs.

Its function is as follows. This is one of the proteins that bind and probably mediate the attachment of the 5S RNA into the large ribosomal subunit, where it forms part of the central protuberance. This chain is Large ribosomal subunit protein uL18, found in Ruegeria sp. (strain TM1040) (Silicibacter sp.).